Reading from the N-terminus, the 241-residue chain is Ribonuclease 3 (241 aa).

Residues 8–137 enclose the RNase III domain; that stretch reads LTLLKNRLGI…LLGAVYLDQG (130 aa). Residue E50 coordinates Mg(2+). The active site involves D54. The Mg(2+) site is built by D123 and E126. The active site involves E126. In terms of domain architecture, DRBM spans 164 to 233; that stretch reads DYKTELQELV…AKKALMKSDL (70 aa). Positions 214 to 241 are disordered; sequence RSKKEAEQQAAKKALMKSDLGSACNHKK.

The protein belongs to the ribonuclease III family. Homodimer. Requires Mg(2+) as cofactor.

It localises to the cytoplasm. It catalyses the reaction Endonucleolytic cleavage to 5'-phosphomonoester.. Functionally, digests double-stranded RNA. Involved in the processing of primary rRNA transcript to yield the immediate precursors to the large and small rRNAs (23S and 16S). Processes some mRNAs, and tRNAs when they are encoded in the rRNA operon. Processes pre-crRNA and tracrRNA of type II CRISPR loci if present in the organism. This chain is Ribonuclease 3, found in Pelotomaculum thermopropionicum (strain DSM 13744 / JCM 10971 / SI).